The primary structure comprises 101 residues: Small ribosomal subunit protein uS14 (101 aa).

This sequence belongs to the universal ribosomal protein uS14 family. As to quaternary structure, part of the 30S ribosomal subunit. Contacts proteins S3 and S10.

Binds 16S rRNA, required for the assembly of 30S particles and may also be responsible for determining the conformation of the 16S rRNA at the A site. In Rhizobium meliloti (strain 1021) (Ensifer meliloti), this protein is Small ribosomal subunit protein uS14.